The primary structure comprises 89 residues: CRISPR-associated endoribonuclease Cas2 2 (89 aa).

Aspartate 9 is a Mg(2+) binding site.

Belongs to the CRISPR-associated endoribonuclease Cas2 protein family. In terms of assembly, homodimer, forms a heterotetramer with a Cas1 homodimer. Requires Mg(2+) as cofactor.

Functionally, CRISPR (clustered regularly interspaced short palindromic repeat), is an adaptive immune system that provides protection against mobile genetic elements (viruses, transposable elements and conjugative plasmids). CRISPR clusters contain sequences complementary to antecedent mobile elements and target invading nucleic acids. CRISPR clusters are transcribed and processed into CRISPR RNA (crRNA). Functions as a ssRNA-specific endoribonuclease. Involved in the integration of spacer DNA into the CRISPR cassette. This Methanospirillum hungatei JF-1 (strain ATCC 27890 / DSM 864 / NBRC 100397 / JF-1) protein is CRISPR-associated endoribonuclease Cas2 2.